We begin with the raw amino-acid sequence, 87 residues long: Phosphoribosyl-ATP pyrophosphatase (87 aa).

Belongs to the PRA-PH family.

Its subcellular location is the cytoplasm. It catalyses the reaction 1-(5-phospho-beta-D-ribosyl)-ATP + H2O = 1-(5-phospho-beta-D-ribosyl)-5'-AMP + diphosphate + H(+). The protein operates within amino-acid biosynthesis; L-histidine biosynthesis; L-histidine from 5-phospho-alpha-D-ribose 1-diphosphate: step 2/9. The sequence is that of Phosphoribosyl-ATP pyrophosphatase from Arthrobacter sp. (strain FB24).